Consider the following 162-residue polypeptide: Regulatory protein RecX (162 aa).

The protein belongs to the RecX family.

It localises to the cytoplasm. Modulates RecA activity. The sequence is that of Regulatory protein RecX from Xanthomonas campestris pv. campestris (strain 8004).